The following is a 542-amino-acid chain: La-related protein 7 homolog (542 aa).

The region spanning 112–239 is the HTH La-type RNA-binding domain; it reads VAEELDIKES…KRRFPFNLEQ (128 aa). The region spanning 247-335 is the RRM domain; that stretch reads RTLYIDFLPP…GSIRIITYKK (89 aa). One can recognise a xRRM domain in the interval 374–542; sequence EIKQNCLIKI…KQNITQNYNK (169 aa).

The protein belongs to the LARP7 family. Component of the telomerase holoenzyme complex, composed of the catalytic core (the catalytic subunit TERT, the telomerase RNA template component TER and TAP65/p65), which is associated with two heterotrimeric subcomplexes: (i) the replication protein A (RPA)-related subcomplex, composed of TEB1, RPA2/TEB2 and RPA3/TEB3 and (ii) the CST-like subcomplex, composed of TAP75/p75, TAP45/p45 and TAP19/p19. TEB1 and the CST-like subcomplex are tethered to the catalytic core by TAP50/p50.

It is found in the chromosome. The protein localises to the telomere. In terms of biological role, RNA-binding protein required for assembly of the holoenzyme telomerase ribonucleoprotein (RNP) complex. Telomerase is an essential ribonucleoprotein enzyme that copies new telomeric repeats onto chromosome ends by repetitively synthesizing the short telomere-repeat sequence 5'-TTGGGG-3' using an RNA template component TER. TAP65/p65 specifically binds telomerase RNA template TER and is required for biogenesis and placement of the TER stem-terminus element: TAP65/p65 first protects the 3'-end of TER from degradation and acts as a chaperone to correctly fold TER for protein binding; it then bends TER stem-loop IV to position it for interaction of stem-loop IV with catalytic TERT RNA-binding domain. The polypeptide is La-related protein 7 homolog (Tetrahymena thermophila (strain SB210)).